Consider the following 251-residue polypeptide: uncharacterized protein (251 aa).

A signal peptide spans 1-25 (MSAGRLNKKSLGIVMLLSVGLLLAG). Cys-26 is lipidated: N-palmitoyl cysteine. Cys-26 carries S-diacylglycerol cysteine lipidation. The region spanning 40-84 (SVYTVKRGDTLYRISRTTGTSVKELARLNGISPPYTIEVGQKLKL) is the LysM domain. Over residues 93 to 112 (TRKSTAKSTTKTASVTPSSA) the composition is skewed to low complexity. A disordered region spans residues 93 to 115 (TRKSTAKSTTKTASVTPSSAVPK).

The protein belongs to the peptidase M23B family.

The protein resides in the cell inner membrane. This is an uncharacterized protein from Escherichia coli (strain K12).